Reading from the N-terminus, the 187-residue chain is Protein GrpE (187 aa).

The tract at residues 1–25 is disordered; that stretch reads MADEQNLDNRAPEETPAAEGTSAGE.

This sequence belongs to the GrpE family. In terms of assembly, homodimer.

It localises to the cytoplasm. Its function is as follows. Participates actively in the response to hyperosmotic and heat shock by preventing the aggregation of stress-denatured proteins, in association with DnaK and GrpE. It is the nucleotide exchange factor for DnaK and may function as a thermosensor. Unfolded proteins bind initially to DnaJ; upon interaction with the DnaJ-bound protein, DnaK hydrolyzes its bound ATP, resulting in the formation of a stable complex. GrpE releases ADP from DnaK; ATP binding to DnaK triggers the release of the substrate protein, thus completing the reaction cycle. Several rounds of ATP-dependent interactions between DnaJ, DnaK and GrpE are required for fully efficient folding. The protein is Protein GrpE of Azotobacter vinelandii (strain DJ / ATCC BAA-1303).